The following is a 1095-amino-acid chain: Solute carrier family 12 member 1 (1095 aa).

Residues 1–173 (MSVNIPSNSV…EEDVTGVVKF (173 aa)) are Cytoplasmic-facing. The short motif at 16 to 19 (RFQV) is the RFXV motif element. The interval 26–45 (HGSGAAMSDSTDPPHYEETS) is disordered. 2 positions are modified to phosphoserine: Ser57 and Ser87. 4 positions are modified to phosphothreonine: Thr91, Thr96, Thr101, and Thr114. Phosphoserine is present on Ser116. A Phosphoserine; by AMPK modification is found at Ser126. At Ser144 the chain carries Phosphoserine. The helical transmembrane segment at 174 to 194 (GWVKGVLVRCMLNIWGVMLFI) threads the bilayer. At 195–197 (RLS) the chain is on the extracellular side. The helical transmembrane segment at 198–218 (WIVGEAGIGLGVIIIGLSVVV) threads the bilayer. Residues 219-255 (TTLTGISMSAICTNGVVRGGGAYYLISRSLGPEFGGS) lie on the Cytoplasmic side of the membrane. The helical transmembrane segment at 256–276 (IGLIFRFANAVRVAMYVVGFA) threads the bilayer. Topologically, residues 277–298 (ETVVDLLKESDSMMVDPTNDIR) are extracellular. The chain crosses the membrane as a helical span at residues 299–319 (IIGSITVVILLGISVAGMEWE). Residues 320–323 (AKAQ) lie on the Cytoplasmic side of the membrane. The chain crosses the membrane as a helical span at residues 324–344 (VILLVILLIGIANFFIGTVIP). Topologically, residues 345-375 (SNNEKKSRGFFNYQASIFAENFGPSFTEGEG) are extracellular. Residues 376-396 (FFSVFAIFFPAATGILAGANI) traverse the membrane as a helical segment. Topologically, residues 397–413 (SGDLEDPQDAIPRGTML) are cytoplasmic. Residues 414–434 (AIFITTVAYIGVAICVRACVV) form a helical membrane-spanning segment. At 435–546 (RDATGSMNDT…NNEPLRGYFL (112 aa)) the chain is on the extracellular side. Residues Asn442 and Asn452 are each glycosylated (N-linked (GlcNAc...) asparagine). The next 2 helical transmembrane spans lie at 547–567 (TFVI…APII) and 568–588 (SNFF…ASYA). Over 589 to 605 (KSPGWRPAYGIYNMWVS) the chain is Extracellular. A helical transmembrane segment spans residues 606 to 626 (LFGAILCCAVMFVINWWAAVI). Topologically, residues 627–1095 (TYVIELFLYI…NHKNVLTFYS (469 aa)) are cytoplasmic.

The protein belongs to the SLC12A transporter family. When phosphorylated, interacts with PPP3CB. Phosphorylated at Ser-87, Thr-96 and Thr-101 by OXSR1/OSR1 and STK39/SPAK downstream of WNK kinases (WNK1, WNK2, WNK3 or WNK4), promoting its activity. In terms of tissue distribution, expressed predominantly in kidney (at protein level).

The protein localises to the apical cell membrane. It catalyses the reaction K(+)(out) + 2 chloride(out) + Na(+)(out) = K(+)(in) + 2 chloride(in) + Na(+)(in). With respect to regulation, activated following phosphorylation by OXSR1/OSR1 and STK39/SPAK downstream of WNK kinases (WNK1, WNK2, WNK3 or WNK4). Renal sodium, potassium and chloride ion cotransporter that mediates the transepithelial NaCl reabsorption in the thick ascending limb and plays an essential role in the urinary concentration and volume regulation. Electrically silent transporter system. The sequence is that of Solute carrier family 12 member 1 (Slc12a1) from Rattus norvegicus (Rat).